Here is a 305-residue protein sequence, read N- to C-terminus: FMRFamide-related peptides type HF-4 (305 aa).

An N-terminal signal peptide occupies residues 1–19; sequence MTSLCLTIAPAVLSLICLS. Phenylalanine amide occurs at positions 36, 47, and 66. Ile-75 carries the isoleucine amide modification. Residues Phe-84 and Phe-93 each carry the phenylalanine amide modification. Ile-102 carries the post-translational modification Isoleucine amide. Phe-111, Phe-120, Phe-129, Phe-138, Phe-147, Phe-156, and Phe-165 each carry phenylalanine amide. A propeptide spanning residues 168-305 is cleaved from the precursor; that stretch reads SVDGEIEAGV…EHKQEYMRFG (138 aa).

The protein belongs to the FARP (FMRFamide related peptide) family. In terms of tissue distribution, central nervous system.

The protein resides in the secreted. Its function is as follows. Can function as both cardioregulatory hormones and transmitters and may regulate cardiovascular function. This chain is FMRFamide-related peptides type HF-4, found in Cornu aspersum (Brown garden snail).